Consider the following 245-residue polypeptide: Protein DEHYDRATION-INDUCED 19 homolog 4 (245 aa).

This sequence belongs to the Di19 family.

The chain is Protein DEHYDRATION-INDUCED 19 homolog 4 (DI19-4) from Oryza sativa subsp. japonica (Rice).